The chain runs to 364 residues: C3a anaphylatoxin chemotactic receptor (364 aa).

At 1-50 (MGDNMDFSEHYGNFSENYVTESYGEFDLYYDPLNETSLSEQGHRSIWVLS) the chain is on the extracellular side. N-linked (GlcNAc...) asparagine glycosylation is found at N13 and N34. Residues 51-71 (IVLCSIACVLGITGNAFVIWI) traverse the membrane as a helical segment. Residues 72 to 82 (AGVKMKRTVNT) lie on the Cytoplasmic side of the membrane. The helical transmembrane segment at 83-103 (IWFVNLAAADLLCCVSIPFSI) threads the bilayer. Topologically, residues 104-120 (ADIILNSHWPYGEAMCK) are extracellular. A disulfide bridge connects residues C119 and C198. The helical transmembrane segment at 121 to 141 (ILPSMVVLNMFASVFTLVLIS) threads the bilayer. Residues 142-159 (LDRFALVILPVWAQNHRS) are Cytoplasmic-facing. A helical membrane pass occupies residues 160–180 (ITLAWLLCGLVWVLGLLLSLP). The Extracellular portion of the chain corresponds to 181-220 (SMIYREIVVHDDMNITLCIYNHLQDKTEGNQSAIKAIHVT). Residues 221-241 (RLILGFLIPLLVIAVCYLLIG) traverse the membrane as a helical segment. Topologically, residues 242-256 (RRVSSGRFKSQRAFQ) are cytoplasmic. A helical membrane pass occupies residues 257 to 277 (IILVVVTTFFVCWLPYHVIGL). Over 278 to 295 (VIEYGKEASQVMARALDP) the chain is Extracellular. Residues 296 to 316 (LAISLAYVNSCLNPVLYVFMG) form a helical membrane-spanning segment. The Cytoplasmic portion of the chain corresponds to 317–364 (QDFKERVRVSLRKIFEKVFSEDVTLRSSVYSKGQSQLSRATNSSEAQV).

The protein belongs to the G-protein coupled receptor 1 family.

Its subcellular location is the cell membrane. In terms of biological role, receptor for the chemotactic and inflammatory peptide anaphylatoxin C3a. This receptor stimulates chemotaxis, granule enzyme release and superoxide anion production. This is C3a anaphylatoxin chemotactic receptor (c3ar1) from Oncorhynchus mykiss (Rainbow trout).